Consider the following 23-residue polypeptide: MINQVSVYRQPPVLSGCRQVKTI.

The protein is Protein YqfH of Escherichia coli (strain K12).